The primary structure comprises 45 residues: DNA-directed RNA polymerase subunit Rpo12 (45 aa).

Zn(2+) contacts are provided by cysteine 8, cysteine 23, and cysteine 26.

It belongs to the archaeal Rpo12/eukaryotic RPC10 RNA polymerase subunit family. Part of the RNA polymerase complex. Zn(2+) serves as cofactor.

The protein resides in the cytoplasm. It catalyses the reaction RNA(n) + a ribonucleoside 5'-triphosphate = RNA(n+1) + diphosphate. DNA-dependent RNA polymerase (RNAP) catalyzes the transcription of DNA into RNA using the four ribonucleoside triphosphates as substrates. The protein is DNA-directed RNA polymerase subunit Rpo12 of Methanosarcina acetivorans (strain ATCC 35395 / DSM 2834 / JCM 12185 / C2A).